The primary structure comprises 476 residues: MEFESVIGLEVHAELLTNTKIYCGCTTEFGGKPNTHVCPVCLGLPGSLPQLNKRVLELGIKAGLALNCEITKVGRMDRKNYFYPDCPKNYQITQDELPICRNGYIDIELESGEVKRIGIERIHIEEDAGKLLHTKRGTLVDFNRAGVPLIEVVSKPDIRTPEEATLYLTKLRSILSSAQISDCKMEEGSLRCDGNISIRERGTEPFGIRSEIKNMNSFKALEKALNYEFDRQVEAVTNGEALSVETRRWDETNNKTIVMRSKEQANDYRYFPEGDLVTLNVSDEWIEEIRNTIPELPYQKADRFVKEYGLPKYDAHVLTLTDSMADYFDECAKLSGDPKAASNWIMGDISRLMKEESTWIEDLKFSPKDLAELIEVIKEGTISSAIGKKVLEDMFAEGKSPKTIIDEKGLKQNNDEGAIRQLVNKVLDENPQVIEQYKSGRTRILGFAVGQVMKETKGQANPGIVNKLVTEEVEKR.

Belongs to the GatB/GatE family. GatB subfamily. In terms of assembly, heterotrimer of A, B and C subunits.

The catalysed reaction is L-glutamyl-tRNA(Gln) + L-glutamine + ATP + H2O = L-glutaminyl-tRNA(Gln) + L-glutamate + ADP + phosphate + H(+). It catalyses the reaction L-aspartyl-tRNA(Asn) + L-glutamine + ATP + H2O = L-asparaginyl-tRNA(Asn) + L-glutamate + ADP + phosphate + 2 H(+). In terms of biological role, allows the formation of correctly charged Asn-tRNA(Asn) or Gln-tRNA(Gln) through the transamidation of misacylated Asp-tRNA(Asn) or Glu-tRNA(Gln) in organisms which lack either or both of asparaginyl-tRNA or glutaminyl-tRNA synthetases. The reaction takes place in the presence of glutamine and ATP through an activated phospho-Asp-tRNA(Asn) or phospho-Glu-tRNA(Gln). The polypeptide is Aspartyl/glutamyl-tRNA(Asn/Gln) amidotransferase subunit B (Clostridium botulinum (strain Alaska E43 / Type E3)).